We begin with the raw amino-acid sequence, 627 residues long: Sister chromatid cohesion 1 protein 1 (627 aa).

Disordered stretches follow at residues 211–294 (GDDE…TATS), 395–416 (MHNH…NLDS), and 461–510 (GDDV…VAEE). Basic and acidic residues-rich tracts occupy residues 254 to 263 (EQQENRRDGF), 272 to 282 (IPDKEEHDRPQ), and 395 to 408 (MHNH…ERSD). Over residues 467 to 487 (MPSTPSARGAASINNIEISSK) the composition is skewed to polar residues.

The protein belongs to the rad21 family. As to quaternary structure, component of the cohesin complex. Isoform 2 is expressed at low levels in buds, leaves and roots, whereas expression of isoform 1 is confined to buds.

It is found in the nucleus. Functionally, involved in chromosome condensation, pairing and segregation during meiosis. Responsible for cohesion between replicated sister chromatids. The protein is Sister chromatid cohesion 1 protein 1 (SYN1) of Arabidopsis thaliana (Mouse-ear cress).